A 42-amino-acid chain; its full sequence is Protein Tat (42 aa).

The tract at residues 1-24 (MEPVDPNLEPWNHPGSQPKTACNQ) is interaction with human CREBBP. The segment at 22–37 (CNQCYCKKCSYHCLVC) is cysteine-rich. Lys-28 carries the N6-acetyllysine; by host PCAF modification.

The protein belongs to the lentiviruses Tat family. In terms of assembly, interacts with host CCNT1. Associates with the P-TEFb complex composed at least of Tat, P-TEFb (CDK9 and CCNT1), TAR RNA, RNA Pol II. Recruits the HATs CREBBP, TAF1/TFIID, EP300, PCAF and GCN5L2. Interacts with host KAT5/Tip60; this interaction targets the latter to degradation. Interacts with the host deacetylase SIRT1. Interacts with host capping enzyme RNGTT; this interaction stimulates RNGTT. Binds to host KDR, and to the host integrins ITGAV/ITGB3 and ITGA5/ITGB1. Interacts with host KPNB1/importin beta-1 without previous binding to KPNA1/importin alpha-1. Interacts with EIF2AK2. Interacts with host nucleosome assembly protein NAP1L1; this interaction may be required for the transport of Tat within the nucleus, since the two proteins interact at the nuclear rim. Interacts with host C1QBP/SF2P32; this interaction involves lysine-acetylated Tat. Interacts with the host chemokine receptors CCR2, CCR3 and CXCR4. Interacts with host DPP4/CD26; this interaction may trigger an anti-proliferative effect. Interacts with host LDLR. Interacts with the host extracellular matrix metalloproteinase MMP1. Interacts with host PRMT6; this interaction mediates Tat's methylation. Interacts with, and is ubiquitinated by MDM2/Hdm2. Interacts with host PSMC3 and HTATIP2. Interacts with STAB1; this interaction may overcome SATB1-mediated repression of IL2 and IL2RA (interleukin) in T cells by binding to the same domain than HDAC1. Interacts (when acetylated) with human CDK13, thereby increasing HIV-1 mRNA splicing and promoting the production of the doubly spliced HIV-1 protein Nef. Interacts with host TBP; this interaction modulates the activity of transcriptional pre-initiation complex. Interacts with host RELA. Interacts with host PLSCR1; this interaction negatively regulates Tat transactivation activity by altering its subcellular distribution. In terms of processing, phosphorylated by EIF2AK2 on serine and threonine residues adjacent to the basic region important for TAR RNA binding and function. Phosphorylation of Tat by EIF2AK2 is dependent on the prior activation of EIF2AK2 by dsRNA. Asymmetrical arginine methylation by host PRMT6 seems to diminish the transactivation capacity of Tat and affects the interaction with host CCNT1. Post-translationally, polyubiquitination by host MDM2 does not target Tat to degradation, but activates its transactivation function and fosters interaction with CCNT1 and TAR RNA.

It localises to the host nucleus. It is found in the host nucleolus. The protein localises to the host cytoplasm. The protein resides in the secreted. Functionally, transcriptional activator that increases RNA Pol II processivity, thereby increasing the level of full-length viral transcripts. Recognizes a hairpin structure at the 5'-LTR of the nascent viral mRNAs referred to as the transactivation responsive RNA element (TAR) and recruits the cyclin T1-CDK9 complex (P-TEFb complex) that will in turn hyperphosphorylate the RNA polymerase II to allow efficient elongation. The CDK9 component of P-TEFb and other Tat-activated kinases hyperphosphorylate the C-terminus of RNA Pol II that becomes stabilized and much more processive. Other factors such as HTATSF1/Tat-SF1, SUPT5H/SPT5, and HTATIP2 are also important for Tat's function. Besides its effect on RNA Pol II processivity, Tat induces chromatin remodeling of proviral genes by recruiting the histone acetyltransferases (HATs) CREBBP, EP300 and PCAF to the chromatin. This also contributes to the increase in proviral transcription rate, especially when the provirus integrates in transcriptionally silent region of the host genome. To ensure maximal activation of the LTR, Tat mediates nuclear translocation of NF-kappa-B by interacting with host RELA. Through its interaction with host TBP, Tat may also modulate transcription initiation. Tat can reactivate a latently infected cell by penetrating in it and transactivating its LTR promoter. In the cytoplasm, Tat is thought to act as a translational activator of HIV-1 mRNAs. In terms of biological role, extracellular circulating Tat can be endocytosed by surrounding uninfected cells via the binding to several surface receptors such as CD26, CXCR4, heparan sulfate proteoglycans (HSPG) or LDLR. Neurons are rarely infected, but they internalize Tat via their LDLR. Through its interaction with nuclear HATs, Tat is potentially able to control the acetylation-dependent cellular gene expression. Modulates the expression of many cellular genes involved in cell survival, proliferation or in coding for cytokines or cytokine receptors. Tat plays a role in T-cell and neurons apoptosis. Tat induced neurotoxicity and apoptosis probably contribute to neuroAIDS. Circulating Tat also acts as a chemokine-like and/or growth factor-like molecule that binds to specific receptors on the surface of the cells, affecting many cellular pathways. In the vascular system, Tat binds to ITGAV/ITGB3 and ITGA5/ITGB1 integrins dimers at the surface of endothelial cells and competes with bFGF for heparin-binding sites, leading to an excess of soluble bFGF. The sequence is that of Protein Tat from Human immunodeficiency virus type 1 group M subtype C (isolate ETH2220) (HIV-1).